We begin with the raw amino-acid sequence, 41 residues long: Large ribosomal subunit protein bL36 (41 aa).

Belongs to the bacterial ribosomal protein bL36 family.

In Zymomonas mobilis subsp. mobilis (strain ATCC 31821 / ZM4 / CP4), this protein is Large ribosomal subunit protein bL36.